An 834-amino-acid polypeptide reads, in one-letter code: DNA polymerase I, thermostable (834 aa).

The region spanning 176–262 (KPEQWVDFRA…DLPLEVDLAQ (87 aa)) is the 5'-3' exonuclease domain. The segment at 412 to 834 (ERLHRNLLKR…MGEDWLSAKG (423 aa)) is polymerase.

The protein belongs to the DNA polymerase type-A family.

It catalyses the reaction DNA(n) + a 2'-deoxyribonucleoside 5'-triphosphate = DNA(n+1) + diphosphate. Functionally, has 5'-3' exonuclease activity and no 3'-5' exonuclease activity. The sequence is that of DNA polymerase I, thermostable (polA) from Thermus caldophilus.